We begin with the raw amino-acid sequence, 275 residues long: Trypsin-4 (275 aa).

The signal sequence occupies residues 1–18 (MSNKITILLAVLLAVVAC). A propeptide spans 19–48 (AQAHASHQRRVPYPLPRFLPRPHHTVSNHR) (activation peptide). The Peptidase S1 domain maps to 49-274 (IVGGFEIDVA…VRDWIRETCG (226 aa)). Cys74 and Cys90 are disulfide-bonded. Active-site charge relay system residues include His89 and Asp134. Cystine bridges form between Cys199-Cys215 and Cys226-Cys250. Residue Ser230 is the Charge relay system of the active site.

This sequence belongs to the peptidase S1 family. In terms of tissue distribution, expressed in the midgut. Expression levels drop a few hours after blood feeding and pick up again 28 hours later.

It localises to the secreted. It catalyses the reaction Preferential cleavage: Arg-|-Xaa, Lys-|-Xaa.. Its function is as follows. Constitutive trypsin that is expressed 2 days after emergence, coinciding with host seeking behavior of the female. The sequence is that of Trypsin-4 (TRYP4) from Anopheles gambiae (African malaria mosquito).